We begin with the raw amino-acid sequence, 251 residues long: Small ribosomal subunit protein uS2 (251 aa).

Belongs to the universal ribosomal protein uS2 family.

This chain is Small ribosomal subunit protein uS2, found in Azoarcus sp. (strain BH72).